The sequence spans 101 residues: Trp operon repressor homolog (101 aa).

The DNA-binding element occupies 59 to 82 (QREIQQNLNTSAATITRGSNMIKT).

This sequence belongs to the TrpR family. As to quaternary structure, homodimer.

Its subcellular location is the cytoplasm. Functionally, this protein is an aporepressor. When complexed with L-tryptophan it binds the operator region of the trp operon and prevents the initiation of transcription. The sequence is that of Trp operon repressor homolog from Haemophilus influenzae (strain 86-028NP).